The sequence spans 45 residues: Movement protein P3a (45 aa).

Residues 9 to 29 form a helical membrane-spanning segment; the sequence is FALGFSSAIPFSVAGLYFVYL.

It belongs to the polerovirus movement protein P3a family. As to quaternary structure, homodimer. Heterodimer with movement protein P17.

Its subcellular location is the host cell junction. The protein localises to the host plasmodesma. It is found in the host Golgi apparatus. The protein resides in the host chloroplast envelope. It localises to the host mitochondrion outer membrane. Its function is as follows. Together with movement protein P17, plays an essential role in virus long distance movement. The protein is Movement protein P3a (ORF3a) of Solanum tuberosum (Potato).